We begin with the raw amino-acid sequence, 1366 residues long: DNA-directed RNA polymerase subunit beta' (1366 aa).

The interval 1–40 is disordered; it reads MTSTSPKSRRSSGKGRKGSKKKGKQVSQIPPLSKTPPSFR. The span at 7–24 shows a compositional bias: basic residues; that stretch reads KSRRSSGKGRKGSKKKGK. A compositionally biased stretch (polar residues) spans 25–38; it reads QVSQIPPLSKTPPS. Residues Cys-250, Cys-317, Cys-324, and Cys-327 each coordinate Zn(2+). The segment at 1299–1366 is disordered; it reads TAAKSTSVLD…LQEEGLLADE (68 aa). Residues 1353 to 1366 are compositionally biased toward low complexity; sequence ALEGLQEEGLLADE.

Belongs to the RNA polymerase beta' chain family. RpoC2 subfamily. As to quaternary structure, in cyanobacteria the RNAP catalytic core is composed of 2 alpha, 1 beta, 1 beta', 1 gamma and 1 omega subunit. When a sigma factor is associated with the core the holoenzyme is formed, which can initiate transcription. Zn(2+) serves as cofactor.

The enzyme catalyses RNA(n) + a ribonucleoside 5'-triphosphate = RNA(n+1) + diphosphate. Functionally, DNA-dependent RNA polymerase catalyzes the transcription of DNA into RNA using the four ribonucleoside triphosphates as substrates. In Prochlorococcus marinus (strain MIT 9211), this protein is DNA-directed RNA polymerase subunit beta'.